Consider the following 339-residue polypeptide: Silicatein (339 aa).

The N-terminal stretch at 1–18 (MAIVYGAILFQIILIACA) is a signal peptide. Residues 19–122 (EFPPEWHAWK…REYQAPATVS (104 aa)) constitute a propeptide that is removed on maturation. The residue at position 123 (Leu-123) is a N,N-dimethylleucine; alternate. Leu-123 carries the post-translational modification N-methylleucine; alternate. Ser-188 carries the phosphoserine modification. Tyr-219 is subject to Phosphotyrosine. Active-site residues include His-286 and Asn-306. Phosphoserine is present on Ser-335.

This sequence belongs to the peptidase C1 family. Homodimer. Homodimerization occurs as a result of non-covalent interactions and not through disulfide linkages between the two monomers.

In terms of biological role, polymerizes silica around the axial filament during spicule formation. The protein is Silicatein of Petrosia ficiformis (Common Mediterranean sponge).